The following is an 89-amino-acid chain: Small ribosomal subunit protein uS15 (89 aa).

Residues 1-24 (MSLNAEQKSEIVEQFRRSPSDTGS) form a disordered region. Positions 7-19 (QKSEIVEQFRRSP) are enriched in basic and acidic residues.

It belongs to the universal ribosomal protein uS15 family. In terms of assembly, part of the 30S ribosomal subunit. Forms a bridge to the 50S subunit in the 70S ribosome, contacting the 23S rRNA.

Functionally, one of the primary rRNA binding proteins, it binds directly to 16S rRNA where it helps nucleate assembly of the platform of the 30S subunit by binding and bridging several RNA helices of the 16S rRNA. Its function is as follows. Forms an intersubunit bridge (bridge B4) with the 23S rRNA of the 50S subunit in the ribosome. The polypeptide is Small ribosomal subunit protein uS15 (Halorhodospira halophila (strain DSM 244 / SL1) (Ectothiorhodospira halophila (strain DSM 244 / SL1))).